The following is a 170-amino-acid chain: Cathelicidin antimicrobial peptide (170 aa).

An N-terminal signal peptide occupies residues Met1 to Ala30. A propeptide spans Gln31–Arg131 (cathelin-like domain (CLD)). 2 cysteine pairs are disulfide-bonded: Cys86–Cys97 and Cys108–Cys125. Positions Leu150–Gly162 are active core.

This sequence belongs to the cathelicidin family. Monomer, homodimer or homotrimer (in vitro). Oligomerizes as tetra- or hexamer in solution (in vitro). Proteolytically cleaved by proteinase PRTN3 into antibacterial peptide LL-37. Proteolytically cleaved by cathepsin CTSG and neutrophil elastase ELANE. Post-translationally, resistant to proteolytic degradation in solution, and when bound to both zwitterionic (mimicking mammalian membranes) and negatively charged membranes (mimicking bacterial membranes). In terms of processing, after secretion onto the skin surface, the CAMP gene product is processed by a serine protease-dependent mechanism into multiple novel antimicrobial peptides distinct from and shorter than cathelicidin LL-37. These peptides show enhanced antimicrobial action, acquiring the ability to kill skin pathogens such as S.aureus, E.coli and C.albicans. These peptides have lost the ability to stimulate CXCL8/IL8 release from keratinocytes. The peptides act synergistically, killing bacteria at lower concentrations when present together, and maintain activity at increased salt condition.

The protein localises to the secreted. It is found in the vesicle. Functionally, antimicrobial protein that is an integral component of the innate immune system. Binds to bacterial lipopolysaccharides (LPS). Acts via neutrophil N-formyl peptide receptors to enhance the release of CXCL2. Postsecretory processing generates multiple cathelicidin antimicrobial peptides with various lengths which act as a topical antimicrobial defense in sweat on skin. The unprocessed precursor form, cathelicidin antimicrobial peptide, inhibits the growth of Gram-negative E.coli and E.aerogenes with efficiencies comparable to that of the mature peptide LL-37 (in vitro). Antimicrobial peptide that is an integral component of the innate immune system. Binds to bacterial lipopolysaccharides (LPS). Causes membrane permeabilization by forming transmembrane pores (in vitro). Causes lysis of E.coli. Exhibits antimicrobial activity against Gram-negative bacteria such as P.aeruginosa, S.typhimurium, E.aerogenes, E.coli and P.syringae, Gram-positive bacteria such as L.monocytogenes, S.epidermidis, S.pyogenes and S.aureus, as well as vancomycin-resistant enterococci (in vitro). Exhibits antimicrobial activity against methicillin-resistant S.aureus, P.mirabilis, and C.albicans in low-salt media, but not in media containing 100 mM NaCl (in vitro). Forms chiral supramolecular assemblies with quinolone signal (PQS) molecules of P.aeruginosa, which may lead to interference of bacterial quorum signaling and perturbance of bacterial biofilm formation. May form supramolecular fiber-like assemblies on bacterial membranes. Induces cytokine and chemokine producation as well as TNF/TNFA and CSF2/GMCSF production in normal human keratinocytes. Exhibits hemolytic activity against red blood cells. In terms of biological role, exhibits antimicrobial activity against E.coli and B.megaterium (in vitro). This chain is Cathelicidin antimicrobial peptide, found in Papio papio (Guinea baboon).